Consider the following 161-residue polypeptide: Cytochrome c-type biogenesis protein CcmE (161 aa).

Residues 1 to 8 (MNPVRKKR) lie on the Cytoplasmic side of the membrane. The helical; Signal-anchor for type II membrane protein transmembrane segment at 9–29 (LYIVLAILCGVSIAVALALTA) threads the bilayer. At 30–161 (LQENINLFYT…AKGYQQESAQ (132 aa)) the chain is on the periplasmic side. Residues His124 and Tyr128 each coordinate heme.

Belongs to the CcmE/CycJ family.

Its subcellular location is the cell inner membrane. Heme chaperone required for the biogenesis of c-type cytochromes. Transiently binds heme delivered by CcmC and transfers the heme to apo-cytochromes in a process facilitated by CcmF and CcmH. This Ectopseudomonas mendocina (strain ymp) (Pseudomonas mendocina) protein is Cytochrome c-type biogenesis protein CcmE.